The chain runs to 141 residues: uncharacterized protein (141 aa).

4 consecutive transmembrane segments (helical) span residues 7 to 24 (YRIPFGIGYLLGTFFLSP), 39 to 56 (FLKFLWFPFWVFSRHRGI), 69 to 91 (FYLIFIFFFLYFAVLGVLSILGF), and 116 to 138 (FFILGLIVADLLHIVLDIVSSFI).

It localises to the cell membrane. This is an uncharacterized protein from Aquifex aeolicus (strain VF5).